The following is a 303-amino-acid chain: Coenzyme PQQ synthesis protein B (303 aa).

The protein belongs to the PqqB family.

It functions in the pathway cofactor biosynthesis; pyrroloquinoline quinone biosynthesis. Its function is as follows. May be involved in the transport of PQQ or its precursor to the periplasm. This Acinetobacter baumannii (strain AYE) protein is Coenzyme PQQ synthesis protein B.